A 1178-amino-acid polypeptide reads, in one-letter code: Mediator of RNA polymerase II transcription subunit 14 (1178 aa).

Residues 1–12 are compositionally biased toward polar residues; it reads MDNSVHNNSNTT. Disordered regions lie at residues 1–50 and 1064–1178; these read MDNS…PITV and LAGT…VVLD. 2 stretches are compositionally biased toward low complexity: residues 1074-1112 and 1119-1164; these read PTQI…QGAA and HQLQ…AQQR.

The protein belongs to the Mediator complex subunit 14 family. As to quaternary structure, component of the Mediator complex.

The protein resides in the nucleus. Its function is as follows. Component of the Mediator complex, a coactivator involved in the regulated transcription of nearly all RNA polymerase II-dependent genes. Mediator functions as a bridge to convey information from gene-specific regulatory proteins to the basal RNA polymerase II transcription machinery. Mediator is recruited to promoters by direct interactions with regulatory proteins and serves as a scaffold for the assembly of a functional preinitiation complex with RNA polymerase II and the general transcription factors. The polypeptide is Mediator of RNA polymerase II transcription subunit 14 (RGR1) (Chaetomium globosum (strain ATCC 6205 / CBS 148.51 / DSM 1962 / NBRC 6347 / NRRL 1970) (Soil fungus)).